Here is a 454-residue protein sequence, read N- to C-terminus: Phosphoglucosamine mutase (454 aa).

The active-site Phosphoserine intermediate is the Ser101. Positions 101, 243, 245, and 247 each coordinate Mg(2+). Ser101 is subject to Phosphoserine.

This sequence belongs to the phosphohexose mutase family. It depends on Mg(2+) as a cofactor. In terms of processing, activated by phosphorylation.

The catalysed reaction is alpha-D-glucosamine 1-phosphate = D-glucosamine 6-phosphate. Its function is as follows. Catalyzes the conversion of glucosamine-6-phosphate to glucosamine-1-phosphate. This chain is Phosphoglucosamine mutase, found in Geobacter sp. (strain M21).